Reading from the N-terminus, the 445-residue chain is Glycine--tRNA ligase (445 aa).

Lysine 97 and glutamate 145 together coordinate substrate. ATP is bound by residues arginine 177–glutamate 179, phenylalanine 187–phenylalanine 192, glutamate 262–isoleucine 263, and glycine 308–arginine 311. Substrate is bound at residue phenylalanine 192 to glutamate 196. Substrate is bound at residue glutamate 304–glycine 308.

It belongs to the class-II aminoacyl-tRNA synthetase family. In terms of assembly, homodimer.

The protein localises to the cytoplasm. It carries out the reaction tRNA(Gly) + glycine + ATP = glycyl-tRNA(Gly) + AMP + diphosphate. Functionally, catalyzes the attachment of glycine to tRNA(Gly). The chain is Glycine--tRNA ligase from Borrelia hermsii (strain HS1 / DAH).